The sequence spans 179 residues: Large ribosomal subunit protein uL5 (179 aa).

Belongs to the universal ribosomal protein uL5 family. As to quaternary structure, part of the 50S ribosomal subunit; part of the 5S rRNA/L5/L18/L25 subcomplex. Contacts the 5S rRNA and the P site tRNA. Forms a bridge to the 30S subunit in the 70S ribosome.

Functionally, this is one of the proteins that bind and probably mediate the attachment of the 5S RNA into the large ribosomal subunit, where it forms part of the central protuberance. In the 70S ribosome it contacts protein S13 of the 30S subunit (bridge B1b), connecting the 2 subunits; this bridge is implicated in subunit movement. Contacts the P site tRNA; the 5S rRNA and some of its associated proteins might help stabilize positioning of ribosome-bound tRNAs. This chain is Large ribosomal subunit protein uL5, found in Burkholderia mallei (strain NCTC 10247).